The following is a 361-amino-acid chain: Septin-2 (361 aa).

Tyr17 carries the post-translational modification Phosphotyrosine. Positions 34–306 (KGFEFTLMVV…ENFRSERLKR (273 aa)) constitute a Septin-type G domain. Residues 44 to 51 (GESGLGKS) are G1 motif. Residues 44–52 (GESGLGKST), Thr78, Gly104, and 183–186 (KADT) each bind GTP. The tract at residues 101–104 (DTPG) is G3 motif. Residues 182-185 (AKAD) are G4 motif. Lys190 is modified (N6-acetyllysine). At Tyr211 the chain carries Phosphotyrosine. The residue at position 218 (Ser218) is a Phosphoserine. Residues Gly241, Arg256, and Tyr258 each coordinate GTP. The interval 260 to 270 (WGVVEVENPEH) is important for dimerization.

The protein belongs to the TRAFAC class TrmE-Era-EngA-EngB-Septin-like GTPase superfamily. Septin GTPase family. In terms of assembly, septins polymerize into heterooligomeric protein complexes that form filaments, and associate with cellular membranes, actin filaments and microtubules. GTPase activity is required for filament formation. Septin filaments are assembled from asymmetrical heterotrimers, composed of SEPTIN2, SEPTIN6 and SEPTIN7 that associate head-to-head to form a hexameric unit. Interaction between SEPTIN2 and SEPTIN7 seems indirect. Also interacts with SEPTIN9 and SEPTIN5. Interaction with SEPTIN4 not detected. Component of a septin core octameric complex consisting of SEPTIN12, SEPTIN7, SEPTIN6 and SEPTIN2 or SEPTIN4 in the order 12-7-6-2-2-6-7-12 or 12-7-6-4-4-6-7-12 and located in the sperm annulus. Interacts with MAP4. Interacts with DZIP1L. Widely expressed.

It is found in the cytoplasm. The protein resides in the cytoskeleton. It localises to the spindle. Its subcellular location is the chromosome. The protein localises to the centromere. It is found in the kinetochore. The protein resides in the cleavage furrow. It localises to the midbody. Its subcellular location is the cell cortex. The protein localises to the cell projection. It is found in the cilium membrane. The protein resides in the cilium. It localises to the flagellum. In terms of biological role, filament-forming cytoskeletal GTPase. Forms a filamentous structure with SEPTIN12, SEPTIN6, SEPTIN2 and probably SEPTIN4 at the sperm annulus which is required for the structural integrity and motility of the sperm tail during postmeiotic differentiation. Required for normal organization of the actin cytoskeleton. Plays a role in the biogenesis of polarized columnar-shaped epithelium by maintaining polyglutamylated microtubules, thus facilitating efficient vesicle transport, and by impeding MAP4 binding to tubulin. Required for the progression through mitosis. Forms a scaffold at the midplane of the mitotic splindle required to maintain CENPE localization at kinetochores and consequently chromosome congression. During anaphase, may be required for chromosome segregation and spindle elongation. Plays a role in ciliogenesis and collective cell movements. In cilia, required for the integrity of the diffusion barrier at the base of the primary cilium that prevents diffusion of transmembrane proteins between the cilia and plasma membranes: probably acts by regulating the assembly of the tectonic-like complex (also named B9 complex) by localizing TMEM231 protein. The polypeptide is Septin-2 (Mus musculus (Mouse)).